A 1671-amino-acid polypeptide reads, in one-letter code: DENN domain-containing protein Crag (1671 aa).

The 157-residue stretch at 39–195 (IEPITDIGVY…DVYLCYKKSM (157 aa)) folds into the MABP domain. The uDENN domain occupies 187-364 (VYLCYKKSMY…DEVPFPAPSI (178 aa)). In terms of domain architecture, cDENN spans 385 to 521 (PLPRSGAGFH…AARLLRQTLT (137 aa)). The region spanning 523-632 (LENAKPISYD…ERSFVSDGDH (110 aa)) is the dDENN domain. Disordered regions lie at residues 997 to 1160 (QQQQ…PVAS), 1245 to 1311 (ANST…RLSE), and 1415 to 1435 (VEESEQSDPLQDGKEQIANGN). 2 stretches are compositionally biased toward acidic residues: residues 1011 to 1023 (GDDDDEDEDEDEY) and 1050 to 1061 (YEADEEDEDEVD). Residues 1072 to 1089 (RVQSPTKISPRTPVTQND) are compositionally biased toward polar residues. The span at 1100-1119 (AASATPTQETQQEQQHSQSQ) shows a compositional bias: low complexity. Residues 1136–1147 (RSATFDESTQIG) show a composition bias toward polar residues. The segment covering 1254-1277 (NGHHPHGLHHGHHHPHHHHHHHSQ) has biased composition (basic residues). A compositionally biased stretch (basic and acidic residues) spans 1281–1301 (AEQEEHDAAVHEEGKLRRVSS).

In terms of assembly, interacts with Cam. Interacts with Rab10. Interacts (via the DENN domains) with Rab11. Expressed in the adult head and body.

It localises to the cytoplasm. The protein localises to the cell cortex. The protein resides in the early endosome. It is found in the recycling endosome. Its subcellular location is the cytoplasmic granule. Functionally, calmodulin-binding protein that acts as a guanine exchange factor for Rab10 and Rab11. Essential for maintenance of adult photoreceptor cells. Upon light stimulation, required for trafficking of newly synthesized ninaE (Rh1) from the trans-Golgi network to rhabdomere membranes via Rab11-dependent vesicular transport. During egg development, essential for establishing and maintaining epithelial cell polarity by regulating the correct polarized deposition of basal membrane (BM) proteins in follicular epithelial (FE) cells. Functions by targeting Rab10 to the basal cytoplasm, where it restricts the secretion of BM proteins such as trol/Pcan and vkg/Coll IV to the basal surface. Appears to be involved in regulating the levels and distribution of the guanine nucleotide exchange factor strat, however the two proteins appear to have independent roles in regulating polarized BM protein secretion in the FE. The protein is DENN domain-containing protein Crag of Drosophila melanogaster (Fruit fly).